The chain runs to 240 residues: Dihydromonapterin reductase (240 aa).

Catalysis depends on tyrosine 152, which acts as the Proton acceptor.

The protein belongs to the short-chain dehydrogenases/reductases (SDR) family. FolM subfamily.

It catalyses the reaction (6S)-5,6,7,8-tetrahydrofolate + NADP(+) = 7,8-dihydrofolate + NADPH + H(+). It carries out the reaction 7,8-dihydromonapterin + NADPH + H(+) = 5,6,7,8-tetrahydromonapterin + NADP(+). Functionally, catalyzes the reduction of dihydromonapterin to tetrahydromonapterin. Also has lower activity with dihydrofolate. The protein is Dihydromonapterin reductase (folM) of Shigella flexneri serotype 5b (strain 8401).